A 335-amino-acid polypeptide reads, in one-letter code: Aliphatic sulfonates import ATP-binding protein SsuB (335 aa).

Residues 29–61 (DGDAQDAAVYERDGGAHAPPFASGGAPPDGDRA) form a disordered region. The ABC transporter domain maps to 74–293 (VRLTRVSKRY…ARASAAFAAL (220 aa)). ATP is bound at residue 106–113 (GRSGCGKS). Residues 308–335 (APAAPNAAGPEGASRGRAAPASGLRWAV) are disordered.

Belongs to the ABC transporter superfamily. Aliphatic sulfonates importer (TC 3.A.1.17.2) family. As to quaternary structure, the complex is composed of two ATP-binding proteins (SsuB), two transmembrane proteins (SsuC) and a solute-binding protein (SsuA).

It is found in the cell inner membrane. The catalysed reaction is ATP + H2O + aliphatic sulfonate-[sulfonate-binding protein]Side 1 = ADP + phosphate + aliphatic sulfonateSide 2 + [sulfonate-binding protein]Side 1.. In terms of biological role, part of the ABC transporter complex SsuABC involved in aliphatic sulfonates import. Responsible for energy coupling to the transport system. This is Aliphatic sulfonates import ATP-binding protein SsuB from Burkholderia pseudomallei (strain 1710b).